The following is a 338-amino-acid chain: Ketol-acid reductoisomerase (NADP(+)) (338 aa).

The KARI N-terminal Rossmann domain occupies 1–181 (MKVFYDKDAD…GGGRAGIIET (181 aa)). Residues 24 to 27 (YGSQ), arginine 47, and serine 52 each bind NADP(+). The active site involves histidine 107. Glycine 133 serves as a coordination point for NADP(+). In terms of domain architecture, KARI C-terminal knotted spans 182-327 (NFREETETDL…GKLRAMMPWI (146 aa)). Mg(2+)-binding residues include aspartate 190, glutamate 194, glutamate 226, and glutamate 230. Serine 251 contacts substrate.

Belongs to the ketol-acid reductoisomerase family. Requires Mg(2+) as cofactor.

The enzyme catalyses (2R)-2,3-dihydroxy-3-methylbutanoate + NADP(+) = (2S)-2-acetolactate + NADPH + H(+). The catalysed reaction is (2R,3R)-2,3-dihydroxy-3-methylpentanoate + NADP(+) = (S)-2-ethyl-2-hydroxy-3-oxobutanoate + NADPH + H(+). The protein operates within amino-acid biosynthesis; L-isoleucine biosynthesis; L-isoleucine from 2-oxobutanoate: step 2/4. Its pathway is amino-acid biosynthesis; L-valine biosynthesis; L-valine from pyruvate: step 2/4. Involved in the biosynthesis of branched-chain amino acids (BCAA). Catalyzes an alkyl-migration followed by a ketol-acid reduction of (S)-2-acetolactate (S2AL) to yield (R)-2,3-dihydroxy-isovalerate. In the isomerase reaction, S2AL is rearranged via a Mg-dependent methyl migration to produce 3-hydroxy-3-methyl-2-ketobutyrate (HMKB). In the reductase reaction, this 2-ketoacid undergoes a metal-dependent reduction by NADPH to yield (R)-2,3-dihydroxy-isovalerate. The sequence is that of Ketol-acid reductoisomerase (NADP(+)) from Cupriavidus metallidurans (strain ATCC 43123 / DSM 2839 / NBRC 102507 / CH34) (Ralstonia metallidurans).